The sequence spans 533 residues: Death domain-containing ATP nucleosidase (533 aa).

Residues 1-262 are death domain; that stretch reads MDAAAIISLL…TAAGKEEKVS (262 aa). A disordered region spans residues 184-248; it reads STFVSDDATQ…TQTSTNSFNS (65 aa). A compositionally biased stretch (polar residues) spans 218-227; sequence PSAQVNQPPT. The segment covering 236–248 has biased composition (low complexity); it reads SGSTQTSTNSFNS. Positions 263 to 533 are purine nucleoside phosphorylase domain; the sequence is DDVTKGIKFL…HLDDDRTIHM (271 aa).

It catalyses the reaction ATP + H2O = D-ribose 5-triphosphate + adenine. The catalysed reaction is dATP + H2O = 2-deoxyribose 5-triphosphate + adenine. Functionally, the C-terminal purine nucleoside phosphorylase (PNP) domain cleaves the N-glycosidic bond of ATP, and to a lesser extent dATP, to release adenine and a sugar triphosphate; has weak activity on ADP and AMP and no activity on dADP, dAMP, adenosine, deoxyadenosine or other (d)NTPs. This chain is Death domain-containing ATP nucleosidase (109585858), found in Amphimedon queenslandica (Sponge).